Consider the following 813-residue polypeptide: LPS-assembly protein LptD (813 aa).

Positions 1 to 29 (MTEQRRSPNNRALPSPAPTSVPARARRAG) are disordered. The first 52 residues, 1–52 (MTEQRRSPNNRALPSPAPTSVPARARRAGGLHAGALRPLVLAMASLSAGAHA), serve as a signal peptide directing secretion.

This sequence belongs to the LptD family. As to quaternary structure, component of the lipopolysaccharide transport and assembly complex. Interacts with LptE and LptA.

The protein resides in the cell outer membrane. Its function is as follows. Together with LptE, is involved in the assembly of lipopolysaccharide (LPS) at the surface of the outer membrane. This chain is LPS-assembly protein LptD, found in Cupriavidus necator (strain ATCC 17699 / DSM 428 / KCTC 22496 / NCIMB 10442 / H16 / Stanier 337) (Ralstonia eutropha).